Reading from the N-terminus, the 20-residue chain is GMP synthase [glutamine-hydrolyzing] (20 aa).

The region spanning 1 to 20 is the GMPS ATP-PPase domain; the sequence is ALGDQLLSVFVDHTLVDEVA.

As to quaternary structure, homodimer.

It catalyses the reaction XMP + L-glutamine + ATP + H2O = GMP + L-glutamate + AMP + diphosphate + 2 H(+). The protein operates within purine metabolism; GMP biosynthesis; GMP from XMP (L-Gln route): step 1/1. In terms of biological role, catalyzes the synthesis of GMP from XMP. This Fructilactobacillus sanfranciscensis (Lactobacillus sanfranciscensis) protein is GMP synthase [glutamine-hydrolyzing] (guaA).